Consider the following 353-residue polypeptide: Peroxisome assembly protein 12-B (353 aa).

Residues 1–19 (MAERGAHITTTSPLDDRPS) lie on the Peroxisomal matrix side of the membrane. The helical transmembrane segment at 20 to 47 (IFEVVAQESLMAAARPALHHIVKVLAES) threads the bilayer. The Cytoplasmic segment spans residues 48–51 (NPAR). The helical transmembrane segment at 52–76 (YGTLWRWFDELYTLLECLLQQHYLS) threads the bilayer. The Peroxisomal matrix portion of the chain corresponds to 77-104 (WASASFSENFYGLKRVTLGKQVGQRNLA). A helical transmembrane segment spans residues 105-134 (RKEYWKSLLLLVLIPYLRIKLEKLVNSLRE). At 135-139 (EEDYS) the chain is on the cytoplasmic side. The chain crosses the membrane as a helical span at residues 140-178 (IQNPTSFHKRCYKAILASYPFLKLGWEAWFLFYQLRYIL). Topologically, residues 179-243 (WNGKHHSPLL…LGAVTLSVSS (65 aa)) are peroxisomal matrix. The helical transmembrane segment at 244-271 (SLSLGVFFLQFLDWWYSAENRETLKSLG) threads the bilayer. Topologically, residues 272 to 353 (NLPVPPPPIH…HLIKLYTPDG (82 aa)) are cytoplasmic. Zn(2+) is bound by residues C298, C301, C319, and C322. The RING-type; degenerate zinc-finger motif lies at 298–337 (CPLCRKVRVNDTALGTSGYVFCYRCAYYYVKTHQRCPVSG).

This sequence belongs to the pex2/pex10/pex12 family. In terms of assembly, component of the PEX2-PEX10-PEX12 retrotranslocation channel.

It localises to the peroxisome membrane. Its pathway is protein modification; protein ubiquitination. Its function is as follows. Component of a retrotranslocation channel required for peroxisome organization by mediating export of the PEX5 receptor from peroxisomes to the cytosol, thereby promoting PEX5 recycling. The retrotranslocation channel is composed of PEX2, PEX10 and PEX12; each subunit contributing transmembrane segments that coassemble into an open channel that specifically allows the passage of PEX5 through the peroxisomal membrane. PEX12 also regulates PEX5 recycling by activating the E3 ubiquitin-protein ligase activity of PEX10. When PEX5 recycling is compromised, PEX12 stimulates PEX10-mediated polyubiquitination of PEX5, leading to its subsequent degradation. This chain is Peroxisome assembly protein 12-B, found in Xenopus laevis (African clawed frog).